Here is a 437-residue protein sequence, read N- to C-terminus: Probable E3 ubiquitin-protein ligase TRIML2 (437 aa).

Residues 14–55 form a B box-type zinc finger; it reads TEDAYCETHLEPTRLFCDVDQITLCSKCFQSQEHKHHMVCGI. Residues C19, H22, C41, and H47 each contribute to the Zn(2+) site. A coiled-coil region spans residues 55–200; it reads IQEAAENYRK…IVELEKKCGE (146 aa). Residues 231 to 429 form the B30.2/SPRY domain; that stretch reads DLSLCHIRGL…DSLTILQHGP (199 aa).

The catalysed reaction is S-ubiquitinyl-[E2 ubiquitin-conjugating enzyme]-L-cysteine + [acceptor protein]-L-lysine = [E2 ubiquitin-conjugating enzyme]-L-cysteine + N(6)-ubiquitinyl-[acceptor protein]-L-lysine.. It participates in protein modification; protein ubiquitination. This Homo sapiens (Human) protein is Probable E3 ubiquitin-protein ligase TRIML2.